Reading from the N-terminus, the 132-residue chain is Small ribosomal subunit protein uS8 (132 aa).

This sequence belongs to the universal ribosomal protein uS8 family. In terms of assembly, part of the 30S ribosomal subunit. Contacts proteins S5 and S12.

Functionally, one of the primary rRNA binding proteins, it binds directly to 16S rRNA central domain where it helps coordinate assembly of the platform of the 30S subunit. This is Small ribosomal subunit protein uS8 from Tropheryma whipplei (strain Twist) (Whipple's bacillus).